A 153-amino-acid chain; its full sequence is Ribosome maturation factor RimP (153 aa).

It belongs to the RimP family.

The protein localises to the cytoplasm. In terms of biological role, required for maturation of 30S ribosomal subunits. The polypeptide is Ribosome maturation factor RimP (Coxiella burnetii (strain CbuG_Q212) (Coxiella burnetii (strain Q212))).